A 521-amino-acid polypeptide reads, in one-letter code: Histone acetyltransferase ESA1 (521 aa).

The segment at 1-32 (MSVGEDKSGTATPQHNTSIRITDDEERSDEKK) is disordered. The segment covering 9 to 20 (GTATPQHNTSIR) has biased composition (polar residues). A Tudor-knot domain is found at 39–90 (ITGCKLYVSKDGEYRLAEILQDHMKKGKKVFYVHYQEFNKRLDEWISADRID). Residues 100 to 154 (VKVDKKDDKKEGKSKTSKKSKSKNGKTGSKSVTSTPQPNEDTAPGTPRNDDEMDL) form a disordered region. Basic and acidic residues predominate over residues 101–113 (KVDKKDDKKEGKS). Residues 114–123 (KTSKKSKSKN) are compositionally biased toward basic residues. Positions 124–133 (GKTGSKSVTS) are enriched in low complexity. The MYST-type HAT domain occupies 192 to 509 (ARVRNLSSVI…LDPSKLSWTP (318 aa)). A C2HC MYST-type; degenerate zinc finger spans residues 225 to 250 (IYICDFTLAYFGSLKQFERFRTKCSM). An ESA1-RPD3 motif motif is present at residues 275 to 296 (RTWCRNLCLLSKLFLDHKTLYY). At Lys292 the chain carries N6-acetyllysine; by autocatalysis. Acetyl-CoA is bound by residues 333 to 337 (ACILT) and 342 to 348 (QKMGFGK). Catalysis depends on Glu368, which acts as the Proton donor/acceptor. Ser372 provides a ligand contact to acetyl-CoA. Polar residues-rich tracts occupy residues 403-418 (NNPQ…DSSV) and 426-436 (QSANIQNGNTP). A disordered region spans residues 403–438 (NNPQLLTEASSKDSSVSPPPGGRQSANIQNGNTPSS).

Belongs to the MYST (SAS/MOZ) family. In terms of assembly, component of the NuA4 histone acetyltransferase complex. Autoacetylation at Lys-292 is required for proper function.

The protein localises to the nucleus. It localises to the chromosome. It carries out the reaction L-lysyl-[histone] + acetyl-CoA = N(6)-acetyl-L-lysyl-[histone] + CoA + H(+). The enzyme catalyses L-lysyl-[protein] + acetyl-CoA = N(6)-acetyl-L-lysyl-[protein] + CoA + H(+). It catalyses the reaction 2-hydroxyisobutanoyl-CoA + L-lysyl-[protein] = N(6)-(2-hydroxyisobutanoyl)-L-lysyl-[protein] + CoA + H(+). The catalysed reaction is (2E)-butenoyl-CoA + L-lysyl-[protein] = N(6)-(2E)-butenoyl-L-lysyl-[protein] + CoA + H(+). Catalytic component of the NuA4 histone acetyltransferase (HAT) complex which is involved in epigenetic transcriptional activation of selected genes principally by acetylation of nucleosomal histones H4, H3, H2B, H2A and H2A variant H2A.Z. Acetylates histone H4 to form H4K5ac, H4K8ac, H4K12ac and H4K16ac, histone H3 to form H3K14ac, and histone H2A to form H2AK4ac and H2AK7ac. The NuA4 complex is involved in the DNA damage response and is required for chromosome segregation. The NuA4 complex plays a direct role in repair of DNA double-strand breaks (DSBs) through homologous recombination. Recruitment to promoters depends on H3K4me. Also acetylates non-histone proteins. In addition to protein acetyltransferase, can use different acyl-CoA substrates, such as 2-hydroxyisobutanoyl-CoA (2-hydroxyisobutyryl-CoA) or (2E)-butenoyl-CoA (crotonyl-CoA), and is able to mediate protein 2-hydroxyisobutyrylation and crotonylation, respectively. The protein is Histone acetyltransferase ESA1 (ESA1) of Debaryomyces hansenii (strain ATCC 36239 / CBS 767 / BCRC 21394 / JCM 1990 / NBRC 0083 / IGC 2968) (Yeast).